The chain runs to 143 residues: Hexaprenyl-diphosphate synthase small subunit ((2E,6E)-farnesyl-diphosphate specific) (143 aa).

As to quaternary structure, dimer of heterodimer or heterotetramer composed of a small (Hexs-a) and large (Hexs-B) subunit.

The enzyme catalyses 3 isopentenyl diphosphate + (2E,6E)-farnesyl diphosphate = all-trans-hexaprenyl diphosphate + 3 diphosphate. Catalyzes the condensation of three molecules of isopentenyl diphosphate with farnesyl diphosphate (FPP) to yield (all-E)-hexaprenyl diphosphate (HexPP; C30), the precursor of the prenyl side chain of menaquinone-6. Large subunit Hexs-B catalyzes the condensation reaction and the final product chain length is cooperatively regulated by both the Hexs-A and Hexs-B subunits using the whole size of the hydrophobic cleft as a ruler. This chain is Hexaprenyl-diphosphate synthase small subunit ((2E,6E)-farnesyl-diphosphate specific) (hexs-a), found in Micrococcus luteus (Micrococcus lysodeikticus).